A 185-amino-acid chain; its full sequence is Ribosome-recycling factor (185 aa).

It belongs to the RRF family.

Its subcellular location is the cytoplasm. Responsible for the release of ribosomes from messenger RNA at the termination of protein biosynthesis. May increase the efficiency of translation by recycling ribosomes from one round of translation to another. This Clostridioides difficile (strain 630) (Peptoclostridium difficile) protein is Ribosome-recycling factor.